Reading from the N-terminus, the 189-residue chain is Pyridoxal 5'-phosphate synthase subunit PdxT (189 aa).

46–48 is an L-glutamine binding site; that stretch reads GES. Cys78 functions as the Nucleophile in the catalytic mechanism. Residues Arg107 and 136 to 137 each bind L-glutamine; that span reads IR. Active-site charge relay system residues include His173 and Glu175.

This sequence belongs to the glutaminase PdxT/SNO family. As to quaternary structure, in the presence of PdxS, forms a dodecamer of heterodimers. Only shows activity in the heterodimer.

The enzyme catalyses aldehydo-D-ribose 5-phosphate + D-glyceraldehyde 3-phosphate + L-glutamine = pyridoxal 5'-phosphate + L-glutamate + phosphate + 3 H2O + H(+). The catalysed reaction is L-glutamine + H2O = L-glutamate + NH4(+). Its pathway is cofactor biosynthesis; pyridoxal 5'-phosphate biosynthesis. In terms of biological role, catalyzes the hydrolysis of glutamine to glutamate and ammonia as part of the biosynthesis of pyridoxal 5'-phosphate. The resulting ammonia molecule is channeled to the active site of PdxS. The protein is Pyridoxal 5'-phosphate synthase subunit PdxT of Roseiflexus castenholzii (strain DSM 13941 / HLO8).